The following is a 151-amino-acid chain: uncharacterized protein (151 aa).

The next 4 membrane-spanning stretches (helical) occupy residues Ile22–Phe42, Ala62–Ile82, Leu97–Phe117, and Ile121–Ala141.

Its subcellular location is the cell membrane. This is an uncharacterized protein from Bacillus subtilis (strain 168).